The following is a 396-amino-acid chain: S-adenosylmethionine synthase (396 aa).

His15 provides a ligand contact to ATP. Asp17 provides a ligand contact to Mg(2+). Position 43 (Glu43) interacts with K(+). 2 residues coordinate L-methionine: Glu56 and Gln99. The flexible loop stretch occupies residues 99–109 (QSADIALGVDR). ATP contacts are provided by residues 175-177 (DGK), 241-242 (RF), Asp250, 256-257 (RK), Ala273, and Lys277. Asp250 provides a ligand contact to L-methionine. Lys281 lines the L-methionine pocket.

The protein belongs to the AdoMet synthase family. As to quaternary structure, homotetramer; dimer of dimers. The cofactor is Mg(2+). It depends on K(+) as a cofactor.

Its subcellular location is the cytoplasm. The catalysed reaction is L-methionine + ATP + H2O = S-adenosyl-L-methionine + phosphate + diphosphate. The protein operates within amino-acid biosynthesis; S-adenosyl-L-methionine biosynthesis; S-adenosyl-L-methionine from L-methionine: step 1/1. In terms of biological role, catalyzes the formation of S-adenosylmethionine (AdoMet) from methionine and ATP. The overall synthetic reaction is composed of two sequential steps, AdoMet formation and the subsequent tripolyphosphate hydrolysis which occurs prior to release of AdoMet from the enzyme. The protein is S-adenosylmethionine synthase of Desulfitobacterium hafniense (strain DSM 10664 / DCB-2).